The sequence spans 156 residues: Endogenous retrovirus group K member 18 Pro protein (156 aa).

One can recognise a Peptidase A2 domain in the interval 21–96 (LEGLVDTGAD…IPLNLWGRDL (76 aa)). The active site involves Asp-26. One can recognise a G-patch domain in the interval 111 to 156 (YSPMSQKIMTKMGYIPGKGLGKNEDGIKVPIEAKINHGREGTGYPF).

This sequence belongs to the peptidase A2 family. HERV class-II K(HML-2) subfamily. In terms of assembly, active as a homodimer. Autoproteolytically processed at the N-terminus. Expected C-terminal autoprocessing not detected. The sequence shown is that of the processed Pro protein.

It carries out the reaction Processing at the authentic HIV-1 PR recognition site and release of the mature p17 matrix and the p24 capsid protein, as a result of the cleavage of the -SQNY-|-PIVQ- cleavage site.. Functionally, retroviral proteases have roles in the processing of the primary translation products and the maturation of the viral particle. Endogenous Pro proteins may have kept, lost or modified their original function during evolution. The chain is Endogenous retrovirus group K member 18 Pro protein (ERVK-18) from Homo sapiens (Human).